The chain runs to 154 residues: Small ribosomal subunit protein uS11c (154 aa).

Belongs to the universal ribosomal protein uS11 family. As to quaternary structure, part of the 30S ribosomal subunit.

Its subcellular location is the plastid. In Helicosporidium sp. subsp. Simulium jonesii (Green alga), this protein is Small ribosomal subunit protein uS11c.